Here is a 231-residue protein sequence, read N- to C-terminus: WAP four-disulfide core domain protein 3 (231 aa).

Residues 1 to 24 form the signal peptide; the sequence is MMLSCLFLLKALLALGSLESWITA. 4 consecutive WAP domains span residues 26–68, 69–114, 119–162, and 163–207; these read EHAK…CRDI, PKGR…VVPI, LAEF…LGDI, and EGGR…VPPV. Disulfide bonds link Cys-33/Cys-57, Cys-40/Cys-61, Cys-44/Cys-56, Cys-50/Cys-65, Cys-76/Cys-102, Cys-85/Cys-106, Cys-89/Cys-101, Cys-95/Cys-110, Cys-126/Cys-150, Cys-133/Cys-154, Cys-137/Cys-149, Cys-143/Cys-158, Cys-170/Cys-195, Cys-178/Cys-199, Cys-182/Cys-194, and Cys-188/Cys-203. N-linked (GlcNAc...) asparagine glycosylation occurs at Asn-107. The N-linked (GlcNAc...) asparagine glycan is linked to Asn-217.

In terms of tissue distribution, ubiquitously expressed.

The protein localises to the secreted. This chain is WAP four-disulfide core domain protein 3 (WFDC3), found in Homo sapiens (Human).